The following is a 290-amino-acid chain: Cilia- and flagella-associated protein 298 (290 aa).

This sequence belongs to the CFAP298 family. In terms of assembly, interacts with ZMYND10. As to expression, expressed in the trachea (at protein level).

The protein resides in the cytoplasm. It is found in the cytoskeleton. It localises to the cilium basal body. Plays a role in motile cilium function, possibly by acting on outer dynein arm assembly. Seems to be important for initiation rather than maintenance of cilium motility. Required for correct positioning of cilia at the apical cell surface, suggesting an additional role in the planar cell polarity (PCP) pathway. May suppress canonical Wnt signaling activity. This Rattus norvegicus (Rat) protein is Cilia- and flagella-associated protein 298.